An 845-amino-acid chain; its full sequence is Putative DEAD-box ATP-dependent RNA helicase 29 (845 aa).

A Q motif motif is present at residues 28–56 (GGFESLNLGPNVFNAIKKKGYKVPTPIQR). The Helicase ATP-binding domain occupies 59–232 (MPLILSGVDV…KAGLREPQLV (174 aa)). 72 to 79 (ARTGSGKT) is a binding site for ATP. The DEAD box signature appears at 180 to 183 (DEAD). The region spanning 256 to 411 (KYSALLYLVR…EVLKNMEEVM (156 aa)) is the Helicase C-terminal domain. Positions 675 to 845 (SGKIKTESGA…GGGGKRGRGR (171 aa)) are disordered. Composition is skewed to basic and acidic residues over residues 696-716 (RWQE…DETT) and 738-754 (VRSE…ERQQ). The span at 770 to 799 (GGRGGARGGRGGGARGGRGGSRDFGGGGRD) shows a compositional bias: gly residues. The segment covering 806–817 (RGGRSGGRDFGG) has biased composition (basic and acidic residues). Over residues 828–845 (GGKRGGGRGGGGKRGRGR) the composition is skewed to basic residues.

Belongs to the DEAD box helicase family. DDX54/DBP10 subfamily.

It carries out the reaction ATP + H2O = ADP + phosphate + H(+). This chain is Putative DEAD-box ATP-dependent RNA helicase 29 (RH29), found in Arabidopsis thaliana (Mouse-ear cress).